The sequence spans 123 residues: Large ribosomal subunit protein bL12 (123 aa).

Belongs to the bacterial ribosomal protein bL12 family. Homodimer. Part of the ribosomal stalk of the 50S ribosomal subunit. Forms a multimeric L10(L12)X complex, where L10 forms an elongated spine to which 2 to 4 L12 dimers bind in a sequential fashion. Binds GTP-bound translation factors.

In terms of biological role, forms part of the ribosomal stalk which helps the ribosome interact with GTP-bound translation factors. Is thus essential for accurate translation. In Roseobacter denitrificans (strain ATCC 33942 / OCh 114) (Erythrobacter sp. (strain OCh 114)), this protein is Large ribosomal subunit protein bL12.